The primary structure comprises 397 residues: Elongation factor Tu (397 aa).

In terms of domain architecture, tr-type G spans 10–207; that stretch reads KPHVNIGTIG…ACDSYIPEPQ (198 aa). The G1 stretch occupies residues 19–26; it reads GHIDHGKT. GTP is bound at residue 19–26; it reads GHIDHGKT. Threonine 26 serves as a coordination point for Mg(2+). The tract at residues 60 to 64 is G2; sequence GITIA. The tract at residues 81–84 is G3; it reads DCPG. GTP is bound by residues 81 to 85 and 136 to 139; these read DCPGH and NKCD. Residues 136–139 are G4; that stretch reads NKCD. The tract at residues 174–176 is G5; sequence SAL.

It belongs to the TRAFAC class translation factor GTPase superfamily. Classic translation factor GTPase family. EF-Tu/EF-1A subfamily. Monomer.

It localises to the cytoplasm. It catalyses the reaction GTP + H2O = GDP + phosphate + H(+). Its function is as follows. GTP hydrolase that promotes the GTP-dependent binding of aminoacyl-tRNA to the A-site of ribosomes during protein biosynthesis. The polypeptide is Elongation factor Tu (Nitratidesulfovibrio vulgaris (strain DSM 19637 / Miyazaki F) (Desulfovibrio vulgaris)).